We begin with the raw amino-acid sequence, 90 residues long: Putative F-box protein At5g16285 (90 aa).

Positions 1–46 constitute an F-box domain; that stretch reads MRIESLLQHDVVERILERLAVNSLPRFKAVSKQWKSTIESQFFQGK.

The chain is Putative F-box protein At5g16285 from Arabidopsis thaliana (Mouse-ear cress).